The primary structure comprises 295 residues: Protoheme IX farnesyltransferase (295 aa).

Transmembrane regions (helical) follow at residues 43-63, 92-112, 114-134, 140-160, 166-186, 231-251, and 272-292; these read PIQLALLVLGTSAAAGGVAAL, SAFVLGVLMCIGSLFLLYALV, PLAALFTLLTIFSYLGWYTPA, WSTEIGAVAGAFPPLIGWSAG, ALGWVLFGVLFFWQVPHFMAV, LLWGLTTWFYGVAAAVTGLWF, and FFASIGYLPLVLGALVIDRLF.

It belongs to the UbiA prenyltransferase family. Protoheme IX farnesyltransferase subfamily.

It localises to the cell inner membrane. The enzyme catalyses heme b + (2E,6E)-farnesyl diphosphate + H2O = Fe(II)-heme o + diphosphate. The protein operates within porphyrin-containing compound metabolism; heme O biosynthesis; heme O from protoheme: step 1/1. In terms of biological role, converts heme B (protoheme IX) to heme O by substitution of the vinyl group on carbon 2 of heme B porphyrin ring with a hydroxyethyl farnesyl side group. This Opitutus terrae (strain DSM 11246 / JCM 15787 / PB90-1) protein is Protoheme IX farnesyltransferase.